The primary structure comprises 266 residues: Signal peptidase I (266 aa).

Over 1–20 the chain is Cytoplasmic; that stretch reads MQTDNTKSNTNKTAKQEWGS. A helical transmembrane segment spans residues 21 to 41; it reads FVFVICIALLIRILIMEPFTV. Topologically, residues 42–266 are periplasmic; sequence PTGSMKATIL…IFRNLYNTDV (225 aa). Catalysis depends on residues Ser-45 and Lys-108.

This sequence belongs to the peptidase S26 family.

It localises to the cell inner membrane. The catalysed reaction is Cleavage of hydrophobic, N-terminal signal or leader sequences from secreted and periplasmic proteins.. The polypeptide is Signal peptidase I (lepB) (Rickettsia massiliae (strain Mtu5)).